The chain runs to 664 residues: Zinc finger protein 800 (664 aa).

The segment at 69–91 adopts a C2H2-type 1; degenerate zinc-finger fold; that stretch reads FECKLCRSLFRGLPNLITHKKFY. K132 participates in a covalent cross-link: Glycyl lysine isopeptide (Lys-Gly) (interchain with G-Cter in SUMO2). 2 stretches are compositionally biased toward polar residues: residues 154–179 and 207–224; these read IEVT…EQSK and SDEQ…SDNS. Positions 154–224 are disordered; the sequence is IEVTESSSTP…QADLETSDNS (71 aa). The C2H2-type 2 zinc finger occupies 230-253; sequence LICCLCRKEFNSRRGVRRHIRKVH. K279 is covalently cross-linked (Glycyl lysine isopeptide (Lys-Gly) (interchain with G-Cter in SUMO2)). Residues 287-310 form a C2H2-type 3 zinc finger; the sequence is RSCPVCCKSFATKANVRRHFDEVH. Position 317 is a phosphoserine (S317). T319 bears the Phosphothreonine mark. Residues 328 to 349 are disordered; that stretch reads QPLFLDSISPKKSFKTRKQKSS. S336 is modified (phosphoserine). Basic residues predominate over residues 339–348; the sequence is KSFKTRKQKS. Residues 357-382 form a C2H2-type 4 zinc finger; the sequence is TACKCLLCKRKYSSQIMLKRHMQIVH. A disordered region spans residues 388-476; sequence GTNSKREKGP…GGQQKTRKPK (89 aa). Residue K392 forms a Glycyl lysine isopeptide (Lys-Gly) (interchain with G-Cter in SUMO2) linkage. A Glycyl lysine isopeptide (Lys-Gly) (interchain with G-Cter in SUMO1); alternate cross-link involves residue K409. Residue K409 forms a Glycyl lysine isopeptide (Lys-Gly) (interchain with G-Cter in SUMO2); alternate linkage. Polar residues predominate over residues 416–436; sequence VESSPPSITHSPQNELKGTNH. A phosphoserine mark is found at S422, S426, S455, S457, S460, and S462. Over residues 458 to 470 the composition is skewed to polar residues; sequence PKSTSPSAAGGQQ. K476 participates in a covalent cross-link: Glycyl lysine isopeptide (Lys-Gly) (interchain with G-Cter in SUMO2). 2 C2H2-type zinc fingers span residues 486–508 and 519–542; these read LYCK…IELH and YKCP…TVVH. Disordered stretches follow at residues 574-599 and 635-664; these read KRGP…PSKK and HHKK…KALV. Basic and acidic residues predominate over residues 577-591; it reads PSRDEAKHSDSKHDG. A Glycyl lysine isopeptide (Lys-Gly) (interchain with G-Cter in SUMO2) cross-link involves residue K599. A C2H2-type 7 zinc finger spans residues 618 to 640; sequence HRCNKCGKAFAKKTYLEHHKKTH. Basic residues predominate over residues 653–664; the sequence is TKGRSTRSKALV.

It belongs to the krueppel C2H2-type zinc-finger protein family.

Its subcellular location is the nucleus. Functionally, may be involved in transcriptional regulation. This is Zinc finger protein 800 (ZNF800) from Homo sapiens (Human).